A 160-amino-acid chain; its full sequence is Cathelin-related peptide SC5 (160 aa).

Residues 1-29 form the signal peptide; that stretch reads METQRASLSLGRRSLWLLLLGLVLASASA. A propeptide spanning residues 30–131 is cleaved from the precursor; that stretch reads QALSYREAVL…DITCAEPQSV (102 aa). Disulfide bonds link Cys-86-Cys-97 and Cys-108-Cys-125.

It belongs to the cathelicidin family.

It localises to the secreted. Its function is as follows. Broad spectrum bactericidal agent. The sequence is that of Cathelin-related peptide SC5 from Ovis aries (Sheep).